Reading from the N-terminus, the 247-residue chain is Probable transcriptional regulatory protein Dalk_2958 (247 aa).

The protein belongs to the TACO1 family.

Its subcellular location is the cytoplasm. The polypeptide is Probable transcriptional regulatory protein Dalk_2958 (Desulfatibacillum aliphaticivorans).